The primary structure comprises 352 residues: Protein RecA (352 aa).

Residue G67 to T74 coordinates ATP.

Belongs to the RecA family.

Its subcellular location is the cytoplasm. Functionally, can catalyze the hydrolysis of ATP in the presence of single-stranded DNA, the ATP-dependent uptake of single-stranded DNA by duplex DNA, and the ATP-dependent hybridization of homologous single-stranded DNAs. It interacts with LexA causing its activation and leading to its autocatalytic cleavage. The polypeptide is Protein RecA (Klebsiella pneumoniae subsp. pneumoniae (strain ATCC 700721 / MGH 78578)).